Here is a 130-residue protein sequence, read N- to C-terminus: ATP synthase epsilon chain (130 aa).

It belongs to the ATPase epsilon chain family. In terms of assembly, F-type ATPases have 2 components, CF(1) - the catalytic core - and CF(0) - the membrane proton channel. CF(1) has five subunits: alpha(3), beta(3), gamma(1), delta(1), epsilon(1). CF(0) has three main subunits: a, b and c.

It is found in the cell inner membrane. Produces ATP from ADP in the presence of a proton gradient across the membrane. The chain is ATP synthase epsilon chain from Campylobacter lari (strain RM2100 / D67 / ATCC BAA-1060).